The sequence spans 385 residues: Acyl-CoA dehydrogenase IpdE1 (385 aa).

Residues 126-129 (QGYS) and S161 each bind FAD. E244 acts as the Proton acceptor in catalysis. An FAD-binding site is contributed by 364–366 (SNE).

The protein belongs to the acyl-CoA dehydrogenase family. In terms of assembly, heterotetramer composed of 2 IpdE1 subunits and 2 IpdE2 subunits. FAD serves as cofactor.

It catalyses the reaction 3-[(3aS,4S,5R,7aS)-5-hydroxy-7a-methyl-1-oxo-octahydro-1H-inden-4-yl]propanoyl-CoA + A = (2E)-3-[(3aS,4S,5R,7aS)-5-hydroxy-7a-methyl-1-oxo-octahydro-1H-inden-4-yl]prop-2-enoyl-CoA + AH2. The protein operates within steroid metabolism; cholesterol degradation. In terms of biological role, involved in cholesterol degradation. Catalyzes the dehydrogenation of 5OH-HIP-CoA to 5OH-HIPE-CoA. Can also use octanoyl-CoA and dihydroferuloyl-CoA, with lower efficiency. Cannot use 3-oxo-4-pregnene-20-carboxyl-CoA (3-OPC-CoA). This chain is Acyl-CoA dehydrogenase IpdE1, found in Mycobacterium tuberculosis (strain ATCC 25618 / H37Rv).